Reading from the N-terminus, the 200-residue chain is NADH-quinone oxidoreductase subunit C (200 aa).

Belongs to the complex I 30 kDa subunit family. In terms of assembly, NDH-1 is composed of 14 different subunits. Subunits NuoB, C, D, E, F, and G constitute the peripheral sector of the complex.

It localises to the cell inner membrane. It carries out the reaction a quinone + NADH + 5 H(+)(in) = a quinol + NAD(+) + 4 H(+)(out). Functionally, NDH-1 shuttles electrons from NADH, via FMN and iron-sulfur (Fe-S) centers, to quinones in the respiratory chain. The immediate electron acceptor for the enzyme in this species is believed to be ubiquinone. Couples the redox reaction to proton translocation (for every two electrons transferred, four hydrogen ions are translocated across the cytoplasmic membrane), and thus conserves the redox energy in a proton gradient. This is NADH-quinone oxidoreductase subunit C from Rhizobium johnstonii (strain DSM 114642 / LMG 32736 / 3841) (Rhizobium leguminosarum bv. viciae).